Reading from the N-terminus, the 1183-residue chain is Chromosome partition protein Smc (1183 aa).

32 to 39 (PNGSGKSN) provides a ligand contact to ATP. Residues 162–483 (EEAAGIKKLQ…KLSQDIREFE (322 aa)) adopt a coiled-coil conformation. Positions 519 to 632 (SGIDGVLISL…VENIDIATDI (114 aa)) constitute an SMC hinge domain. The stretch at 666–1019 (INQIFERKKE…VMDLIQEIDE (354 aa)) forms a coiled coil.

Belongs to the SMC family. Homodimer.

Its subcellular location is the cytoplasm. Its function is as follows. Required for chromosome condensation and partitioning. This Fusobacterium nucleatum subsp. nucleatum (strain ATCC 25586 / DSM 15643 / BCRC 10681 / CIP 101130 / JCM 8532 / KCTC 2640 / LMG 13131 / VPI 4355) protein is Chromosome partition protein Smc.